An 80-amino-acid polypeptide reads, in one-letter code: Small ribosomal subunit protein bS18A (80 aa).

The protein belongs to the bacterial ribosomal protein bS18 family. As to quaternary structure, part of the 30S ribosomal subunit. Forms a tight heterodimer with protein bS6.

Its function is as follows. Binds as a heterodimer with protein bS6 to the central domain of the 16S rRNA, where it helps stabilize the platform of the 30S subunit. The protein is Small ribosomal subunit protein bS18A of Rhodococcus jostii (strain RHA1).